Here is a 184-residue protein sequence, read N- to C-terminus: ATP synthase subunit b, chloroplastic (184 aa).

The helical transmembrane segment at 27–49 (LATNPINLSVVLGVLIFFGKGVL) threads the bilayer.

It belongs to the ATPase B chain family. As to quaternary structure, F-type ATPases have 2 components, F(1) - the catalytic core - and F(0) - the membrane proton channel. F(1) has five subunits: alpha(3), beta(3), gamma(1), delta(1), epsilon(1). F(0) has four main subunits: a(1), b(1), b'(1) and c(10-14). The alpha and beta chains form an alternating ring which encloses part of the gamma chain. F(1) is attached to F(0) by a central stalk formed by the gamma and epsilon chains, while a peripheral stalk is formed by the delta, b and b' chains.

The protein localises to the plastid. It is found in the chloroplast thylakoid membrane. In terms of biological role, f(1)F(0) ATP synthase produces ATP from ADP in the presence of a proton or sodium gradient. F-type ATPases consist of two structural domains, F(1) containing the extramembraneous catalytic core and F(0) containing the membrane proton channel, linked together by a central stalk and a peripheral stalk. During catalysis, ATP synthesis in the catalytic domain of F(1) is coupled via a rotary mechanism of the central stalk subunits to proton translocation. Component of the F(0) channel, it forms part of the peripheral stalk, linking F(1) to F(0). This chain is ATP synthase subunit b, chloroplastic, found in Solanum bulbocastanum (Wild potato).